The following is a 507-amino-acid chain: ATP synthase subunit alpha, chloroplastic (507 aa).

170 to 177 (GDRQTGKT) is an ATP binding site.

The protein belongs to the ATPase alpha/beta chains family. As to quaternary structure, F-type ATPases have 2 components, CF(1) - the catalytic core - and CF(0) - the membrane proton channel. CF(1) has five subunits: alpha(3), beta(3), gamma(1), delta(1), epsilon(1). CF(0) has four main subunits: a, b, b' and c.

It localises to the plastid. It is found in the chloroplast thylakoid membrane. The catalysed reaction is ATP + H2O + 4 H(+)(in) = ADP + phosphate + 5 H(+)(out). Its function is as follows. Produces ATP from ADP in the presence of a proton gradient across the membrane. The alpha chain is a regulatory subunit. The sequence is that of ATP synthase subunit alpha, chloroplastic from Drimys granadensis.